The sequence spans 456 residues: MTKKALSAVILAAGKGTRMYSDLPKVLHTIAGKPMVKHVIDIAHQLGSENIHLIYGHGGDLMRTHLANEQVNWVLQTEQLGTAHAVQQAAPFFKDNENIVVLYGDAPLITKETLEKLIEAKPENGIALLTVNLDNPTGYGRIIRENGNVVAIVEQKDANAEQLNIKEVNTGVMVSDGASFKKWLARVGNNNAQGEYYLTDLIALANQDNCQVVAVQATDVMEVEGANNRLQLAALERYFQNKQASKLLLEGVMIYDPARFDLRGTLEHGKDVEIDVNVIIEGNVKLGDCVKIGAGCVLKNVVIGNDVEIKPYSVLEDSIVGEKAAIGPFSRLRPGAELAAETHVGNFVEIKKSTVGKGSKVNHLTYVGDSEIGSNCNIGAGVITCNYDGANKFKTIIGDDVFVGSDTQLVAPVKVANGATIGAGTTITRDVGENELVITRVAQRHIQGWQRPIKKK.

The pyrophosphorylase stretch occupies residues 1 to 229; sequence MTKKALSAVI…VMEVEGANNR (229 aa). UDP-N-acetyl-alpha-D-glucosamine-binding positions include 11–14, K25, Q76, 81–82, 103–105, G140, E154, N169, and N227; these read LAAG, GT, and YGD. D105 lines the Mg(2+) pocket. N227 contributes to the Mg(2+) binding site. The interval 230–250 is linker; sequence LQLAALERYFQNKQASKLLLE. The tract at residues 251-456 is N-acetyltransferase; the sequence is GVMIYDPARF…QGWQRPIKKK (206 aa). UDP-N-acetyl-alpha-D-glucosamine contacts are provided by R333 and K351. Catalysis depends on H363, which acts as the Proton acceptor. Positions 366 and 377 each coordinate UDP-N-acetyl-alpha-D-glucosamine. Acetyl-CoA-binding positions include A380, 386–387, S405, A423, and R440; that span reads NY.

This sequence in the N-terminal section; belongs to the N-acetylglucosamine-1-phosphate uridyltransferase family. It in the C-terminal section; belongs to the transferase hexapeptide repeat family. Homotrimer. Mg(2+) is required as a cofactor.

Its subcellular location is the cytoplasm. The catalysed reaction is alpha-D-glucosamine 1-phosphate + acetyl-CoA = N-acetyl-alpha-D-glucosamine 1-phosphate + CoA + H(+). It carries out the reaction N-acetyl-alpha-D-glucosamine 1-phosphate + UTP + H(+) = UDP-N-acetyl-alpha-D-glucosamine + diphosphate. Its pathway is nucleotide-sugar biosynthesis; UDP-N-acetyl-alpha-D-glucosamine biosynthesis; N-acetyl-alpha-D-glucosamine 1-phosphate from alpha-D-glucosamine 6-phosphate (route II): step 2/2. The protein operates within nucleotide-sugar biosynthesis; UDP-N-acetyl-alpha-D-glucosamine biosynthesis; UDP-N-acetyl-alpha-D-glucosamine from N-acetyl-alpha-D-glucosamine 1-phosphate: step 1/1. It participates in bacterial outer membrane biogenesis; LPS lipid A biosynthesis. Catalyzes the last two sequential reactions in the de novo biosynthetic pathway for UDP-N-acetylglucosamine (UDP-GlcNAc). The C-terminal domain catalyzes the transfer of acetyl group from acetyl coenzyme A to glucosamine-1-phosphate (GlcN-1-P) to produce N-acetylglucosamine-1-phosphate (GlcNAc-1-P), which is converted into UDP-GlcNAc by the transfer of uridine 5-monophosphate (from uridine 5-triphosphate), a reaction catalyzed by the N-terminal domain. The chain is Bifunctional protein GlmU from Haemophilus influenzae (strain 86-028NP).